Here is a 152-residue protein sequence, read N- to C-terminus: D-aminoacyl-tRNA deacylase (152 aa).

The short motif at 142–143 (GP) is the Gly-cisPro motif, important for rejection of L-amino acids element.

It belongs to the DTD family. In terms of assembly, homodimer.

It is found in the cytoplasm. The catalysed reaction is glycyl-tRNA(Ala) + H2O = tRNA(Ala) + glycine + H(+). It catalyses the reaction a D-aminoacyl-tRNA + H2O = a tRNA + a D-alpha-amino acid + H(+). Functionally, an aminoacyl-tRNA editing enzyme that deacylates mischarged D-aminoacyl-tRNAs. Also deacylates mischarged glycyl-tRNA(Ala), protecting cells against glycine mischarging by AlaRS. Acts via tRNA-based rather than protein-based catalysis; rejects L-amino acids rather than detecting D-amino acids in the active site. By recycling D-aminoacyl-tRNA to D-amino acids and free tRNA molecules, this enzyme counteracts the toxicity associated with the formation of D-aminoacyl-tRNA entities in vivo and helps enforce protein L-homochirality. This is D-aminoacyl-tRNA deacylase from Burkholderia cenocepacia (strain ATCC BAA-245 / DSM 16553 / LMG 16656 / NCTC 13227 / J2315 / CF5610) (Burkholderia cepacia (strain J2315)).